Reading from the N-terminus, the 540-residue chain is Chaperonin GroEL (540 aa).

ATP-binding positions include 29–32 (TIGP), 86–90 (DGTTT), Gly-413, 477–479 (NAA), and Asp-493.

Belongs to the chaperonin (HSP60) family. In terms of assembly, forms a cylinder of 14 subunits composed of two heptameric rings stacked back-to-back. Interacts with the co-chaperonin GroES.

The protein resides in the cytoplasm. The catalysed reaction is ATP + H2O + a folded polypeptide = ADP + phosphate + an unfolded polypeptide.. Its function is as follows. Together with its co-chaperonin GroES, plays an essential role in assisting protein folding. The GroEL-GroES system forms a nano-cage that allows encapsulation of the non-native substrate proteins and provides a physical environment optimized to promote and accelerate protein folding. The chain is Chaperonin GroEL from Lactobacillus helveticus (strain DPC 4571).